The sequence spans 60 residues: Short neurotoxin 1 (60 aa).

Cystine bridges form between Cys3–Cys22, Cys17–Cys39, Cys41–Cys52, and Cys53–Cys58.

Belongs to the three-finger toxin family. Short-chain subfamily. Type I alpha-neurotoxin sub-subfamily. Expressed by the venom gland.

It localises to the secreted. Functionally, binds to muscle nicotinic acetylcholine receptor (nAChR) and inhibit acetylcholine from binding to the receptor, thereby impairing neuromuscular transmission. The chain is Short neurotoxin 1 from Dendroaspis viridis (Western green mamba).